We begin with the raw amino-acid sequence, 190 residues long: Translation initiation factor IF-3 (190 aa).

It belongs to the IF-3 family. Monomer.

It is found in the cytoplasm. In terms of biological role, IF-3 binds to the 30S ribosomal subunit and shifts the equilibrium between 70S ribosomes and their 50S and 30S subunits in favor of the free subunits, thus enhancing the availability of 30S subunits on which protein synthesis initiation begins. This chain is Translation initiation factor IF-3, found in Prochlorococcus marinus (strain AS9601).